Consider the following 860-residue polypeptide: DNA mismatch repair protein MutS (860 aa).

Position 606–613 (Gly-606–Ser-613) interacts with ATP.

The protein belongs to the DNA mismatch repair MutS family.

Functionally, this protein is involved in the repair of mismatches in DNA. It is possible that it carries out the mismatch recognition step. This protein has a weak ATPase activity. The protein is DNA mismatch repair protein MutS of Geobacillus sp. (strain WCH70).